The chain runs to 379 residues: Multicilin (379 aa).

The tract at residues Met-1 to Ser-129 is necessary and sufficient for its degradation during the cell cycle. Disordered regions lie at residues Ser-26–Pro-71 and Leu-88–Gln-107. Polar residues predominate over residues Ala-92–Gln-107. Residues Ser-130 to Ser-379 are necessary and sufficient for proper nuclear localization. The necessary and sufficient for interaction with GMNN and sufficient for homodimerization stretch occupies residues Pro-171–Gln-241. The stretch at Glu-175 to Leu-223 forms a coiled coil. The segment covering Asn-291–Ser-309 has biased composition (basic and acidic residues). The interval Asn-291–Asn-312 is disordered.

Belongs to the geminin family. As to quaternary structure, heterodimer (via coiled-coil domain) with GMNN (via coiled-coil domain); targets GMNN to the nucleus. Can form homodimers (in vitro, via coiled-coil domain), but these are much less stable than the heterodimer formed with GMNN.

It localises to the nucleus. Transcription regulator specifically required for multiciliate cell differentiation. Acts in a multiprotein complex containing E2F4 and E2F5 that binds and activates genes required for centriole biogenesis. Required for the deuterosome-mediated acentriolar pathway. Plays a role in mitotic cell cycle progression by promoting cell cycle exit. Modulates GMNN activity by reducing its affinity for CDT1. The polypeptide is Multicilin (Mcidas) (Mus musculus (Mouse)).